The sequence spans 273 residues: Phosphatidylglycerol--prolipoprotein diacylglyceryl transferase (273 aa).

7 consecutive transmembrane segments (helical) span residues 19–39 (VHWYGLMYLLAFLCAWGLASY), 55–75 (LVFYGALGVVLGGRVGYVLFY), 90–110 (VWTGGMSFHGGFIGVMLAMIL), 125–145 (FIAPCVPTGLMFGRIGNFIGA), 174–194 (PSQIYQAICEGLLLFILLWWF), 202–222 (MAVSALFLMGYGVARFVVEFF), and 230–250 (GFILFGWMTKGQILTVPMLLI). An a 1,2-diacyl-sn-glycero-3-phospho-(1'-sn-glycerol)-binding site is contributed by Arg138.

This sequence belongs to the Lgt family.

The protein resides in the cell inner membrane. The enzyme catalyses L-cysteinyl-[prolipoprotein] + a 1,2-diacyl-sn-glycero-3-phospho-(1'-sn-glycerol) = an S-1,2-diacyl-sn-glyceryl-L-cysteinyl-[prolipoprotein] + sn-glycerol 1-phosphate + H(+). It functions in the pathway protein modification; lipoprotein biosynthesis (diacylglyceryl transfer). Its function is as follows. Catalyzes the transfer of the diacylglyceryl group from phosphatidylglycerol to the sulfhydryl group of the N-terminal cysteine of a prolipoprotein, the first step in the formation of mature lipoproteins. This is Phosphatidylglycerol--prolipoprotein diacylglyceryl transferase from Acinetobacter baylyi (strain ATCC 33305 / BD413 / ADP1).